The following is a 228-amino-acid chain: Octanoyltransferase (228 aa).

Residues 30–214 (KKIGDTLLLL…YFGKVFGKSL (185 aa)) enclose the BPL/LPL catalytic domain. Residues 75–82 (RGGDVTYH), 144–146 (AIG), and 157–159 (GFA) contribute to the substrate site. The Acyl-thioester intermediate role is filled by C175.

The protein belongs to the LipB family.

Its subcellular location is the cytoplasm. The catalysed reaction is octanoyl-[ACP] + L-lysyl-[protein] = N(6)-octanoyl-L-lysyl-[protein] + holo-[ACP] + H(+). The protein operates within protein modification; protein lipoylation via endogenous pathway; protein N(6)-(lipoyl)lysine from octanoyl-[acyl-carrier-protein]: step 1/2. In terms of biological role, catalyzes the transfer of endogenously produced octanoic acid from octanoyl-acyl-carrier-protein onto the lipoyl domains of lipoate-dependent enzymes. Lipoyl-ACP can also act as a substrate although octanoyl-ACP is likely to be the physiological substrate. This chain is Octanoyltransferase, found in Caldicellulosiruptor bescii (strain ATCC BAA-1888 / DSM 6725 / KCTC 15123 / Z-1320) (Anaerocellum thermophilum).